A 331-amino-acid chain; its full sequence is Peroxisomal nicotinamide adenine dinucleotide carrier (331 aa).

Solcar repeat units lie at residues 2–91 (SDAL…FRNR), 109–216 (VGMF…MLTK), and 229–320 (VTAL…LVKG). A run of 6 helical transmembrane segments spans residues 5 to 25 (LING…TYPL), 63 to 85 (LYGG…YYFY), 116 to 136 (LVAA…WVIV), 180 to 200 (VYDE…LIMV), 235 to 255 (FLLG…LLVV), and 293 to 313 (YKGM…LFMI).

The protein belongs to the mitochondrial carrier (TC 2.A.29) family. Homodimer. As to expression, expressed in cotyledons, hypocotyls, vascular tissues, trichomes, hydathodes, seeds, pedicels, flowers and stigma.

It is found in the glyoxysome membrane. With respect to regulation, inhibited by pyridoxal 5'-phosphate, bathophenanthroline, tannic acid, mersalyl, mercuric chloride and bromocresol purple. Mediates the NAD(+) import into peroxisomes. Favors the NAD(+)(in)/AMP(out) antiport exchange, but is also able to catalyze a low unidirectional transport that might be essential under special conditions. Transports CoA, dephospho-CoA, acetyl-CoA, adenosine 3',5'-diphosphate (PAP), NAD(+), AMP, ADP and NADH, but has no activity with ATP, GTP, GDP, NADPH, NADP(+) or FAD. Required for peroxisomes proliferation. The polypeptide is Peroxisomal nicotinamide adenine dinucleotide carrier (PXN) (Arabidopsis thaliana (Mouse-ear cress)).